Consider the following 100-residue polypeptide: Apolipoprotein C-II (100 aa).

Positions 1-22 are cleaved as a signal peptide; it reads MGSRFLLALFLVLLVLGCEVQA. Residues 66–74 are lipid binding; that stretch reads SVDEKLRDM. Residues 78–100 form a lipoprotein lipase cofactor region; it reads SSAAMTTYASIFTDQIFTLLKGE.

It belongs to the apolipoprotein C2 family. Post-translationally, proapolipoprotein C-II is synthesized as a sialic acid containing glycoprotein which is subsequently desialylated prior to its proteolytic processing. Proapolipoprotein C-II, the major form found in plasma undergoes proteolytic cleavage of its N-terminal hexapeptide to generate the mature form apolipoprotein C-II, which occurs as the minor form in plasma.

The protein localises to the secreted. Its function is as follows. Component of chylomicrons, very low-density lipoproteins (VLDL), low-density lipoproteins (LDL), and high-density lipoproteins (HDL) in plasma. Plays an important role in lipoprotein metabolism as an activator of lipoprotein lipase. In Bramus lutescens (Transcaucasian mole vole), this protein is Apolipoprotein C-II (APOC2).